The chain runs to 520 residues: ADP,ATP carrier protein 4 (520 aa).

The next 12 helical transmembrane spans lie at 43–63, 80–100, 111–131, 166–186, 201–221, 240–260, 305–325, 339–359, 370–390, 399–419, 462–482, and 485–505; these read LSKF…QNLI, ISFL…AIYV, IFYL…YVIF, FSLF…LLFW, FYPL…QFLE, FHTL…IVGI, LIAT…GPWK, AAFI…FVVL, FTAA…FFAV, LIVA…IGAI, LGKS…PSAS, and SISV…FWAV.

The protein belongs to the ADP/ATP translocase tlc family.

It localises to the cell membrane. Its function is as follows. Provides the rickettsial cell with host ATP in exchange for rickettsial ADP. This is an obligate exchange system. This energy acquiring activity is an important component of rickettsial parasitism. The protein is ADP,ATP carrier protein 4 (tlcD) of Rickettsia bellii (strain RML369-C).